A 968-amino-acid polypeptide reads, in one-letter code: Leucine--tRNA ligase (968 aa).

Residues 1-13 (MTETPTGTQSSRE) are compositionally biased toward polar residues. The segment at 1–22 (MTETPTGTQSSRETAADDTPRH) is disordered. The 'HIGH' region signature appears at 75–86 (PYPSGEGLHVGH). The 'KMSKS' region motif lies at 741–745 (KIGKS). K744 is an ATP binding site.

Belongs to the class-I aminoacyl-tRNA synthetase family.

The protein resides in the cytoplasm. The catalysed reaction is tRNA(Leu) + L-leucine + ATP = L-leucyl-tRNA(Leu) + AMP + diphosphate. The chain is Leucine--tRNA ligase from Mycolicibacterium vanbaalenii (strain DSM 7251 / JCM 13017 / BCRC 16820 / KCTC 9966 / NRRL B-24157 / PYR-1) (Mycobacterium vanbaalenii).